Here is a 255-residue protein sequence, read N- to C-terminus: uncharacterized protein (255 aa).

A divalent metal cation-binding residues include His-6, His-8, Glu-92, His-128, His-153, and Asp-203.

This sequence belongs to the metallo-dependent hydrolases superfamily. TatD-type hydrolase family. A divalent metal cation serves as cofactor.

This is an uncharacterized protein from Bacillus subtilis (strain 168).